Consider the following 178-residue polypeptide: Stage V sporulation protein T (178 aa).

Positions 5 to 51 constitute a SpoVT-AbrB domain; the sequence is GIVRRIDDLGRVVIPKEIRRTLRIREGDPLEIFVDRDGEVILKKYSP. Residues 56–178 form a GAF-like region; the sequence is GDFAKEYADA…AGFLARQMEQ (123 aa).

It to B.subtilis AbrB and Abh. Homotetramer. Two monomers dimerize via their N-terminal swapped-hairpin domains. These dimers further associate into tetramers through helical interactions between their C-terminal GAF-like domains.

In terms of biological role, transcriptional factor that positively regulates or negatively the expression of a large number of forespore-specific sigma G-dependent genes. May provide a mechanism of feedback control that is important for forespore development. SpoVT levels during spore formation have a major impact on the germination and the resistance of the resultant spores. The chain is Stage V sporulation protein T from Bacillus subtilis (strain 168).